The chain runs to 175 residues: Sec-independent protein translocase protein TatB (175 aa).

The chain crosses the membrane as a helical span at residues 1–21 (MLDLGLSKMALIGVVALVVLG). A compositionally biased stretch (low complexity) spans 96–115 (VSPGGSAAADAPDGPSAASG). Disordered regions lie at residues 96–119 (VSPG…EPSW) and 152–175 (QVQS…ARFL). The segment covering 160-175 (VARHRPASLRRPARFL) has biased composition (basic residues).

Belongs to the TatB family. The Tat system comprises two distinct complexes: a TatABC complex, containing multiple copies of TatA, TatB and TatC subunits, and a separate TatA complex, containing only TatA subunits. Substrates initially bind to the TatABC complex, which probably triggers association of the separate TatA complex to form the active translocon.

It localises to the cell inner membrane. Its function is as follows. Part of the twin-arginine translocation (Tat) system that transports large folded proteins containing a characteristic twin-arginine motif in their signal peptide across membranes. Together with TatC, TatB is part of a receptor directly interacting with Tat signal peptides. TatB may form an oligomeric binding site that transiently accommodates folded Tat precursor proteins before their translocation. This chain is Sec-independent protein translocase protein TatB, found in Burkholderia pseudomallei (strain 1710b).